Consider the following 211-residue polypeptide: 7-carboxy-7-deazaguanine synthase (211 aa).

Residues 22–24 and Arg-37 each bind substrate; that span reads LQG. The 184-residue stretch at 28-211 folds into the Radical SAM core domain; sequence NTGMPSVFVR…LQTHKLIGIE (184 aa). The [4Fe-4S] cluster site is built by Cys-41, Cys-45, and Cys-48. Thr-50 is a Mg(2+) binding site. Residue Thr-78 coordinates substrate. S-adenosyl-L-methionine is bound by residues Gly-80 and 122–124; that span reads SPK.

The protein belongs to the radical SAM superfamily. 7-carboxy-7-deazaguanine synthase family. As to quaternary structure, homodimer. [4Fe-4S] cluster serves as cofactor. Requires S-adenosyl-L-methionine as cofactor. The cofactor is Mg(2+).

It carries out the reaction 6-carboxy-5,6,7,8-tetrahydropterin + H(+) = 7-carboxy-7-deazaguanine + NH4(+). It participates in purine metabolism; 7-cyano-7-deazaguanine biosynthesis. Its function is as follows. Catalyzes the complex heterocyclic radical-mediated conversion of 6-carboxy-5,6,7,8-tetrahydropterin (CPH4) to 7-carboxy-7-deazaguanine (CDG), a step common to the biosynthetic pathways of all 7-deazapurine-containing compounds. The protein is 7-carboxy-7-deazaguanine synthase of Haemophilus influenzae (strain ATCC 51907 / DSM 11121 / KW20 / Rd).